The primary structure comprises 238 residues: uncharacterized protein (238 aa).

Residues 1–20 (MPNLHSLPLGTRPENAIRNN) are disordered.

Belongs to the PEP2 family.

This is an uncharacterized protein from Emericella nidulans (strain FGSC A4 / ATCC 38163 / CBS 112.46 / NRRL 194 / M139) (Aspergillus nidulans).